Reading from the N-terminus, the 206-residue chain is Potassium-transporting ATPase KdpC subunit (206 aa).

The helical transmembrane segment at 14–34 (VLAVFTLFGLGLAYSLIATGI) threads the bilayer.

This sequence belongs to the KdpC family. The system is composed of three essential subunits: KdpA, KdpB and KdpC.

Its subcellular location is the cell inner membrane. Functionally, part of the high-affinity ATP-driven potassium transport (or Kdp) system, which catalyzes the hydrolysis of ATP coupled with the electrogenic transport of potassium into the cytoplasm. This subunit acts as a catalytic chaperone that increases the ATP-binding affinity of the ATP-hydrolyzing subunit KdpB by the formation of a transient KdpB/KdpC/ATP ternary complex. The protein is Potassium-transporting ATPase KdpC subunit of Xanthomonas axonopodis pv. citri (strain 306).